The primary structure comprises 122 residues: Large ribosomal subunit protein uL14 (122 aa).

Belongs to the universal ribosomal protein uL14 family. In terms of assembly, part of the 50S ribosomal subunit. Forms a cluster with proteins L3 and L19. In the 70S ribosome, L14 and L19 interact and together make contacts with the 16S rRNA in bridges B5 and B8.

Binds to 23S rRNA. Forms part of two intersubunit bridges in the 70S ribosome. This chain is Large ribosomal subunit protein uL14, found in Thioalkalivibrio sulfidiphilus (strain HL-EbGR7).